The chain runs to 205 residues: CASP-like protein 0U1 (205 aa).

Topologically, residues 1-66 (MSGGDIDPTA…GYHKFAVFQF (66 aa)) are cytoplasmic. An MARVEL domain is found at 10–162 (AINSPKFRLI…SMMFTWKEWR (153 aa)). The helical transmembrane segment at 67-87 (LVVICVTYWLFTMLWMGMYLI) threads the bilayer. The Extracellular segment spans residues 88–90 (QKV). Residues 91-111 (PPAGTEFMIYAVFNVLILIAF) traverse the membrane as a helical segment. The Cytoplasmic portion of the chain corresponds to 112 to 137 (STSWTECNETIVDPTYPVCKRATGAK). A helical transmembrane segment spans residues 138–158 (ASIAFAMFTWLALCVSMMFTW). At 159–167 (KEWRDQNYE) the chain is on the extracellular side. Residues 168 to 188 (GLPIFGDFSSFMPGGGGGGMG) traverse the membrane as a helical segment. Residues 189–205 (GGGGYERPSDVNTQTYA) are Cytoplasmic-facing.

It belongs to the Casparian strip membrane proteins (CASP) family. Homodimer and heterodimers.

The protein localises to the cell membrane. This Micromonas pusilla (strain CCMP1545) (Picoplanktonic green alga) protein is CASP-like protein 0U1.